A 144-amino-acid polypeptide reads, in one-letter code: MQNILLLNGPNLNMLGKREPHIYGDQTLLEIEQRLKQQAIKQGYNLLCFQANGEEAIINRIHQAFGNIDFIIINPAAFTHTSIAIRDALLAVAIPFIEVHLSNICSRESFRHHSYFSDISQGIICGLGPKGYDYALDFAISSLK.

Y23 acts as the Proton acceptor in catalysis. Residues N74, H80, and D87 each contribute to the substrate site. Catalysis depends on H100, which acts as the Proton donor. Substrate contacts are provided by residues 101-102 (LS) and R111.

This sequence belongs to the type-II 3-dehydroquinase family. Homododecamer.

The enzyme catalyses 3-dehydroquinate = 3-dehydroshikimate + H2O. Its pathway is metabolic intermediate biosynthesis; chorismate biosynthesis; chorismate from D-erythrose 4-phosphate and phosphoenolpyruvate: step 3/7. Catalyzes a trans-dehydration via an enolate intermediate. The polypeptide is 3-dehydroquinate dehydratase (Haemophilus ducreyi (strain 35000HP / ATCC 700724)).